A 390-amino-acid polypeptide reads, in one-letter code: S-adenosylmethionine synthase 2 (390 aa).

Glu9 is a Mg(2+) binding site. His15 provides a ligand contact to ATP. Glu43 lines the K(+) pocket. Residues Glu56 and Gln99 each coordinate L-methionine. ATP contacts are provided by residues 167-169, 235-238, Asp246, 252-253, Ala269, Lys273, and Lys277; these read DGK, SGRF, and RK. Asp246 is a binding site for L-methionine. Residue Lys277 coordinates L-methionine.

This sequence belongs to the AdoMet synthase family. As to quaternary structure, homotetramer. The cofactor is Mn(2+). Mg(2+) is required as a cofactor. Requires Co(2+) as cofactor. It depends on K(+) as a cofactor.

Its subcellular location is the cytoplasm. It carries out the reaction L-methionine + ATP + H2O = S-adenosyl-L-methionine + phosphate + diphosphate. Its pathway is amino-acid biosynthesis; S-adenosyl-L-methionine biosynthesis; S-adenosyl-L-methionine from L-methionine: step 1/1. In terms of biological role, catalyzes the formation of S-adenosylmethionine from methionine and ATP. The reaction comprises two steps that are both catalyzed by the same enzyme: formation of S-adenosylmethionine (AdoMet) and triphosphate, and subsequent hydrolysis of the triphosphate. This chain is S-adenosylmethionine synthase 2 (SAM2), found in Actinidia chinensis var. chinensis (Chinese soft-hair kiwi).